The following is a 426-amino-acid chain: Fc receptor-like B (426 aa).

An N-terminal signal peptide occupies residues 1–17 (MWPLTALLLLVPSSGQA). Ig-like C2-type domains lie at 23 to 101 (PILS…LSVS) and 103 to 189 (DWLI…VAVT). Cystine bridges form between Cys-44–Cys-85 and Cys-124–Cys-168. N-linked (GlcNAc...) asparagine glycosylation is present at Asn-152. Positions 400 to 426 (ELRGTPETPTSHFAVSPGTPETTPVES) are disordered. Residues 406–426 (ETPTSHFAVSPGTPETTPVES) show a composition bias toward polar residues.

Expressed at low levels. Expressed in B-lymphocytes. Detected in tonsil, lung, kidney, spleen and placenta. Expressed by a small subset of germinal center B-cells in tonsils and by melanocytes (at protein level).

It is found in the cytoplasm. The protein resides in the endoplasmic reticulum. The chain is Fc receptor-like B (FCRLB) from Homo sapiens (Human).